The chain runs to 299 residues: Delta-9 desaturase-like 5 protein (299 aa).

Helical transmembrane passes span 31–51 and 55–75; these read ADII…LAPF and WEAL…ITFS. The short motif at 77 to 82 is the Histidine box-1 element; that stretch reads HRNLAH. The Histidine box-2 motif lies at 114 to 118; the sequence is HRFHH. Transmembrane regions (helical) follow at residues 174 to 194 and 199 to 219; these read IGFH…LPYL and GVGG…CHIW. The Histidine box-3 motif lies at 246–250; sequence HNNHH.

This sequence belongs to the fatty acid desaturase type 1 family. It depends on Fe cation as a cofactor.

Its subcellular location is the endoplasmic reticulum membrane. Its pathway is lipid metabolism; polyunsaturated fatty acid biosynthesis. The protein is Delta-9 desaturase-like 5 protein of Arabidopsis thaliana (Mouse-ear cress).